Consider the following 319-residue polypeptide: MKKKKIGLLVMAYGTPDSLDEVEAYYTHIRHGRKPSEEALQDLIGRYKAIGGISPLAKITKEQAHKLTDSMNNMFTEYEFNCYLGLKHTAPFIEDAVEEMKRDGIEQAISIVLAPHYSTFSIKAYNERAIRLSEEIGGPVIEPIDQWYDEPKFISYWADQIKETFTKIEDNEKAVVIFSAHSLPEKIIAAGDPYVEQLQYTADLIAAAANIQNYTIGWQSAGNTSDSWIGPDVQDLTRDLFEEHRYESFIYCPVGFVAEHLEVLYDNDYECKVVTDELNAAYFRPTMPNAQSTFIDCLATIVSRKMKEIVDKELILNNN.

Fe-coproporphyrin III contacts are provided by residues Tyr-13, Arg-30, 46–47 (RY), Ser-54, and Tyr-125. Fe(2+) is bound by residues His-181 and Glu-262.

The protein belongs to the ferrochelatase family.

Its subcellular location is the cytoplasm. The enzyme catalyses Fe-coproporphyrin III + 2 H(+) = coproporphyrin III + Fe(2+). Its pathway is porphyrin-containing compound metabolism; protoheme biosynthesis. In terms of biological role, involved in coproporphyrin-dependent heme b biosynthesis. Catalyzes the insertion of ferrous iron into coproporphyrin III to form Fe-coproporphyrin III. The sequence is that of Coproporphyrin III ferrochelatase 2 from Bacillus thuringiensis subsp. konkukian (strain 97-27).